Reading from the N-terminus, the 319-residue chain is MMNSSQFSDSQTTSLHRIPTFYCCYLLQSINKKQSFYIGSTPNPVRRLRQHNGNLSNGGAYRTKREGTRPWEMVLVVYGFTSKIAALQFEHAWQHGYKTHYIPMDDRIMKNANSGRTVHHKLGLVRQLLANVYFRHMNLKVHFFSMPILDVWNLNKFNIKMGSNEISVDVSQVSQETKTNLEQASDDDDDNGACSRDERNLQLVTELYDNTVTKENEIKEIIKDILVLGERNCNLCGQCYDYTSEDDTMKMHIFICPNSTCHYEAHLNCLYEKFIEEESGIDSKNILLPNFCMCPGCLDEMSWSDFVKISTMIKNSFSN.

The 84-residue stretch at 20 to 103 (TFYCCYLLQS…QHGYKTHYIP (84 aa)) folds into the GIY-YIG domain. Residues 233–297 (CNLCGQCYDY…LPNFCMCPGC (65 aa)) form an SLX1-type zinc finger.

The protein belongs to the SLX1 family. As to quaternary structure, forms a heterodimer with SLX4. It depends on a divalent metal cation as a cofactor.

The protein resides in the nucleus. Catalytic subunit of the SLX1-SLX4 structure-specific endonuclease that resolves DNA secondary structures generated during DNA repair and recombination. Has endonuclease activity towards branched DNA substrates, introducing single-strand cuts in duplex DNA close to junctions with ss-DNA. This Vanderwaltozyma polyspora (strain ATCC 22028 / DSM 70294 / BCRC 21397 / CBS 2163 / NBRC 10782 / NRRL Y-8283 / UCD 57-17) (Kluyveromyces polysporus) protein is Structure-specific endonuclease subunit SLX1.